The sequence spans 241 residues: MSGHSKWASIKHSKGKADKQRSKVFSKLSKEISVAAKLGDKDPAMNPRLRSAIQAAKSANMPKDNIERAIAKSSVNSETNYENLRYEGFGPDKIAVIVEALTDNKNRTASNVRSIFVKSGGNLGTQGSASHNFNQLGIIKIDKKEISDEQIFELAIESGADECISNDEFHEIQCPMSEIYNVKKNLEKTIANFISTEIEWVPLNSVDVEKDKVEAALEFLETLEDDDDVQSVYSNINFKNN.

The tract at residues methionine 1–valine 24 is disordered.

Belongs to the TACO1 family.

The protein resides in the cytoplasm. The protein is Probable transcriptional regulatory protein SAR11_0592 of Pelagibacter ubique (strain HTCC1062).